The following is a 134-amino-acid chain: Small ribosomal subunit protein uS12 (134 aa).

A disordered region spans residues 1-26 (MPTIQQLVRKGRESFADKSKSPALNS). Over residues 10–20 (KGRESFADKSK) the composition is skewed to basic and acidic residues. At D89 the chain carries 3-methylthioaspartic acid. The tract at residues 103–134 (DTAGVNGRTQRRSKYGAKRPKPGQAPAAKGKK) is disordered. Positions 111–123 (TQRRSKYGAKRPK) are enriched in basic residues. Positions 124–134 (PGQAPAAKGKK) are enriched in low complexity.

This sequence belongs to the universal ribosomal protein uS12 family. In terms of assembly, part of the 30S ribosomal subunit. Contacts proteins S8 and S17. May interact with IF1 in the 30S initiation complex.

Its function is as follows. With S4 and S5 plays an important role in translational accuracy. Functionally, interacts with and stabilizes bases of the 16S rRNA that are involved in tRNA selection in the A site and with the mRNA backbone. Located at the interface of the 30S and 50S subunits, it traverses the body of the 30S subunit contacting proteins on the other side and probably holding the rRNA structure together. The combined cluster of proteins S8, S12 and S17 appears to hold together the shoulder and platform of the 30S subunit. The polypeptide is Small ribosomal subunit protein uS12 (Porphyromonas gingivalis (strain ATCC BAA-308 / W83)).